A 483-amino-acid chain; its full sequence is Allantoate deiminase 1 (483 aa).

The signal sequence occupies residues 1-30 (MYSATASNTFFLLSCFLLFCLLSAPSCVSM). The Mn(2+) site is built by His125, Asp136, Glu173, His239, and His457.

This sequence belongs to the peptidase M20A family. Homodimer. Requires Mn(2+) as cofactor. As to expression, expressed in roots, stems and leaves. Not detected in nodules.

It localises to the endoplasmic reticulum. It carries out the reaction allantoate + H2O + 2 H(+) = (S)-2-ureidoglycine + NH4(+) + CO2. Inhibited by borate, fluoride, L-Asn and L-Asp. Functionally, involved in the catabolism of purine nucleotides. Can use allantoate as substrate. The sequential activity of AAH, UGLYAH and UAH allows a complete purine breakdown without the intermediate generation of urea. The polypeptide is Allantoate deiminase 1 (Glycine max (Soybean)).